The primary structure comprises 296 residues: Protoheme IX farnesyltransferase 1 (296 aa).

A run of 8 helical transmembrane segments spans residues 14–34 (IVLLLVITAVTTMYAGDALSA), 41–61 (LWDYAHLMAAGALASAGSSAL), 86–106 (IGENIVLAYGLAISSAAVVYA), 108–128 (FLLNAPTAFFIALGIFSYVII), 141–161 (IVIGGIAGSAASWAGWTAATG), 165–185 (LLGFLIGFLVFVWTPSHFWCL), 230–250 (AFGMGLVYLVIAVASGGLMLV), and 274–294 (YLTIIFAAVALDAAFHYPFPF).

This sequence belongs to the UbiA prenyltransferase family. Protoheme IX farnesyltransferase subfamily.

It localises to the cell membrane. It catalyses the reaction heme b + (2E,6E)-farnesyl diphosphate + H2O = Fe(II)-heme o + diphosphate. The protein operates within porphyrin-containing compound metabolism; heme O biosynthesis; heme O from protoheme: step 1/1. Functionally, converts heme B (protoheme IX) to heme O by substitution of the vinyl group on carbon 2 of heme B porphyrin ring with a hydroxyethyl farnesyl side group. The polypeptide is Protoheme IX farnesyltransferase 1 (Cenarchaeum symbiosum (strain A)).